Here is a 259-residue protein sequence, read N- to C-terminus: Ribosomal RNA large subunit methyltransferase E (259 aa).

5 residues coordinate S-adenosyl-L-methionine: Gly49, Trp51, Asp69, Asp88, and Asp112. Lys152 functions as the Proton acceptor in the catalytic mechanism. Positions 199–257 (PIAEGDEHTVEIVDTGDEGDGIARIEGYTLFVDDAAEGDTVDVTVTDLKPNYGFAERRD) constitute a TRAM domain.

It belongs to the class I-like SAM-binding methyltransferase superfamily. RNA methyltransferase RlmE family.

It is found in the cytoplasm. The catalysed reaction is uridine(2552) in 23S rRNA + S-adenosyl-L-methionine = 2'-O-methyluridine(2552) in 23S rRNA + S-adenosyl-L-homocysteine + H(+). In terms of biological role, specifically methylates the uridine in position 2552 of 23S rRNA at the 2'-O position of the ribose in the fully assembled 50S ribosomal subunit. The chain is Ribosomal RNA large subunit methyltransferase E from Halobacterium salinarum (strain ATCC 29341 / DSM 671 / R1).